The chain runs to 178 residues: MRVLVLPEELRDELKEPLGVLYRCHGVECVERMSDHLRAAERVIAVGDITTFYLLKASFIPDLMIVDHKTKRSPVEDSIKRRHLEGSYRVVNVENPAGTLTEELLDAVRESLNGCTPTEIIVDGEEDLAALPAILYAPLGSAVVYGQPSVGSVLVMVTPEKKREIEGILRRMTVKEKV.

D48, I49, D67, K69, and E126 together coordinate GTP.

It belongs to the GTP-dependent DPCK family.

It catalyses the reaction 3'-dephospho-CoA + GTP = GDP + CoA + H(+). It participates in cofactor biosynthesis; coenzyme A biosynthesis. Its function is as follows. Catalyzes the GTP-dependent phosphorylation of the 3'-hydroxyl group of dephosphocoenzyme A to form coenzyme A (CoA). The polypeptide is GTP-dependent dephospho-CoA kinase (Methanothrix thermoacetophila (strain DSM 6194 / JCM 14653 / NBRC 101360 / PT) (Methanosaeta thermophila)).